The sequence spans 313 residues: Guanine nucleotide-binding protein-like 3-like protein (313 aa).

A compositionally biased stretch (basic residues) spans 1 to 14; sequence MGIKKKRQSKRLTT. A disordered region spans residues 1 to 41; that stretch reads MGIKKKRQSKRLTTRKREGMLKRARANERKKRRMDRKMQAK. Residues 15–27 are compositionally biased toward basic and acidic residues; that stretch reads RKREGMLKRARAN. GTP-binding positions include 95-98, 178-185, and 212-215; these read SKSD, GNPGSGKN, and TLSS.

Belongs to the MMR1/HSR1 GTP-binding protein family.

The protein localises to the nucleus. Its subcellular location is the nucleolus. In terms of biological role, required for normal processing of ribosomal pre-rRNA. Required for cell proliferation. Binds GTP. The sequence is that of Guanine nucleotide-binding protein-like 3-like protein from Encephalitozoon cuniculi (strain GB-M1) (Microsporidian parasite).